A 178-amino-acid chain; its full sequence is ATP synthase subunit delta (178 aa).

The protein belongs to the ATPase delta chain family. In terms of assembly, F-type ATPases have 2 components, F(1) - the catalytic core - and F(0) - the membrane proton channel. F(1) has five subunits: alpha(3), beta(3), gamma(1), delta(1), epsilon(1). F(0) has three main subunits: a(1), b(2) and c(10-14). The alpha and beta chains form an alternating ring which encloses part of the gamma chain. F(1) is attached to F(0) by a central stalk formed by the gamma and epsilon chains, while a peripheral stalk is formed by the delta and b chains.

The protein resides in the cell inner membrane. In terms of biological role, f(1)F(0) ATP synthase produces ATP from ADP in the presence of a proton or sodium gradient. F-type ATPases consist of two structural domains, F(1) containing the extramembraneous catalytic core and F(0) containing the membrane proton channel, linked together by a central stalk and a peripheral stalk. During catalysis, ATP synthesis in the catalytic domain of F(1) is coupled via a rotary mechanism of the central stalk subunits to proton translocation. This protein is part of the stalk that links CF(0) to CF(1). It either transmits conformational changes from CF(0) to CF(1) or is implicated in proton conduction. This is ATP synthase subunit delta from Cellvibrio japonicus (strain Ueda107) (Pseudomonas fluorescens subsp. cellulosa).